The chain runs to 268 residues: Small ribosomal subunit protein eS1 (268 aa).

The tract at residues 1–21 is disordered; sequence MAVGKNKGLSKGGKKGGKKKV.

The protein belongs to the eukaryotic ribosomal protein eS1 family. Component of the small ribosomal subunit. Mature ribosomes consist of a small (40S) and a large (60S) subunit. The 40S subunit contains about 33 different proteins and 1 molecule of RNA (18S). The 60S subunit contains about 49 different proteins and 3 molecules of RNA (28S, 5.8S and 5S).

The protein resides in the cytoplasm. Functionally, essential for oogenesis; required for late follicle cell development. This is Small ribosomal subunit protein eS1 from Drosophila sechellia (Fruit fly).